The primary structure comprises 228 residues: NAD(P)H-hydrate epimerase (228 aa).

The YjeF N-terminal domain occupies 9 to 215; sequence AISIDEELFN…RLEEKYSLEL (207 aa). A (6S)-NADPHX-binding site is contributed by 58–62; it reads NNGGD. The K(+) site is built by asparagine 59 and aspartate 123. (6S)-NADPHX is bound by residues 127-133 and aspartate 156; that span reads GFSFKPP. Serine 159 lines the K(+) pocket.

It belongs to the NnrE/AIBP family. Requires K(+) as cofactor.

It carries out the reaction (6R)-NADHX = (6S)-NADHX. It catalyses the reaction (6R)-NADPHX = (6S)-NADPHX. Its function is as follows. Catalyzes the epimerization of the S- and R-forms of NAD(P)HX, a damaged form of NAD(P)H that is a result of enzymatic or heat-dependent hydration. This is a prerequisite for the S-specific NAD(P)H-hydrate dehydratase to allow the repair of both epimers of NAD(P)HX. In Anopheles darlingi (Mosquito), this protein is NAD(P)H-hydrate epimerase.